The following is a 420-amino-acid chain: Adenylosuccinate synthetase (420 aa).

GTP is bound by residues 12 to 18 (GDEGKGK) and 40 to 42 (GHT). Residue Asp13 is the Proton acceptor of the active site. The Mg(2+) site is built by Asp13 and Gly40. IMP-binding positions include 13 to 16 (DEGK), 38 to 41 (NAGH), Thr128, Arg142, Gln221, Thr236, and Arg299. His41 serves as the catalytic Proton donor. Substrate is bound at residue 295–301 (ATTGRPR). Residues Arg301, 327–329 (KAD), and 399–401 (SYG) each bind GTP.

It belongs to the adenylosuccinate synthetase family. In terms of assembly, homodimer. Requires Mg(2+) as cofactor.

The protein localises to the cytoplasm. It catalyses the reaction IMP + L-aspartate + GTP = N(6)-(1,2-dicarboxyethyl)-AMP + GDP + phosphate + 2 H(+). It participates in purine metabolism; AMP biosynthesis via de novo pathway; AMP from IMP: step 1/2. Plays an important role in the de novo pathway of purine nucleotide biosynthesis. Catalyzes the first committed step in the biosynthesis of AMP from IMP. This Petrotoga mobilis (strain DSM 10674 / SJ95) protein is Adenylosuccinate synthetase.